The sequence spans 174 residues: Gamma-crystallin A (174 aa).

Beta/gamma crystallin 'Greek key' domains follow at residues 2-40 and 41-83; these read GKIT…RVDS and GCWM…RSIP. Residues 84–87 form a connecting peptide region; it reads YTSS. Beta/gamma crystallin 'Greek key' domains lie at 88 to 128 and 129 to 171; these read HRIR…HVLE and GCWV…RRVM.

Belongs to the beta/gamma-crystallin family.

Its function is as follows. Crystallins are the dominant structural components of the vertebrate eye lens. The chain is Gamma-crystallin A (Cryga) from Mus musculus (Mouse).